Here is a 977-residue protein sequence, read N- to C-terminus: Vacuolar membrane protease (977 aa).

Topologically, residues 1–17 are cytoplasmic; it reads MARSRTAGRCNPFAFYR. A helical transmembrane segment spans residues 18–38; the sequence is VPVTVFVTLIYVALLAPIIVV. Topologically, residues 39–383 are vacuolar; that stretch reads HHILPAVPES…AFAVFEIHTL (345 aa). N-linked (GlcNAc...) asparagine glycosylation is found at N113 and N116. The Zn(2+) site is built by H166 and D178. The active-site Proton acceptor is the E212. Zn(2+) contacts are provided by E213, E238, and H311. Residues 384 to 404 traverse the membrane as a helical segment; sequence FALSVTLLIVGPLTLFITSII. The Cytoplasmic portion of the chain corresponds to 405-438; sequence LANQDRMYLFGISVPVDDGFGSVPLRGWRGFFRF. A helical membrane pass occupies residues 439-459; it reads PFIFGSTTASVVALAYLMAKI. Topologically, residues 460 to 469 are vacuolar; the sequence is NPMIAHSSEY. Residues 470–490 form a helical membrane-spanning segment; it reads AVWSMMISAWVFVAWFLSRIA. The Cytoplasmic segment spans residues 491-500; that stretch reads NFARPSALHR. Residues 501–521 form a helical membrane-spanning segment; the sequence is IYVLTWMFLLTWVLLVITTVY. Residues 522–525 are Vacuolar-facing; it reads ENRD. The helical transmembrane segment at 526–546 threads the bilayer; the sequence is GIASGYFVIFYAFGTFMATWI. Residues 547–659 lie on the Cytoplasmic side of the membrane; that stretch reads SYLELFSLPK…WSANLPKWTW (113 aa). Polar residues predominate over residues 566–576; that stretch reads GQISSRPTSLG. Residues 566 to 604 form a disordered region; the sequence is GQISSRPTSLGGSRLLTPSGESVGQHPEDEEPTESTSLL. The helical transmembrane segment at 660–680 threads the bilayer; the sequence is ILQFLLIAPIVIILIGQLGLL. Topologically, residues 681-696 are vacuolar; it reads ITSAIHQTMQDGSSTL. The chain crosses the membrane as a helical span at residues 697–717; it reads VPYLIIALLTTFLFMPTLPFI. The Cytoplasmic portion of the chain corresponds to 718-726; the sequence is HRYTYHIPT. A helical transmembrane segment spans residues 727 to 747; the sequence is FLFLIFVATLVYNLVAFPFSG. At 748–977 the chain is on the vacuolar side; it reads NNRTKLFFLQ…LVKGSRSFEV (230 aa). N749 and N791 each carry an N-linked (GlcNAc...) asparagine glycan.

Belongs to the peptidase M28 family. It depends on Zn(2+) as a cofactor.

It localises to the vacuole membrane. In terms of biological role, may be involved in vacuolar sorting and osmoregulation. The chain is Vacuolar membrane protease from Talaromyces marneffei (strain ATCC 18224 / CBS 334.59 / QM 7333) (Penicillium marneffei).